The following is a 131-amino-acid chain: Arsenate reductase 2 (131 aa).

Catalysis depends on nucleophile residues cysteine 10, cysteine 82, and cysteine 89. Cystine bridges form between cysteine 10-cysteine 82 and cysteine 82-cysteine 89.

This sequence belongs to the low molecular weight phosphotyrosine protein phosphatase family. Thioredoxin-coupled ArsC subfamily.

It is found in the cytoplasm. It catalyses the reaction arsenate + [thioredoxin]-dithiol + H(+) = arsenite + [thioredoxin]-disulfide + H2O. Functionally, catalyzes the reduction of arsenate [As(V)] to arsenite [As(III)]. This chain is Arsenate reductase 2, found in Staphylococcus epidermidis (strain ATCC 35984 / DSM 28319 / BCRC 17069 / CCUG 31568 / BM 3577 / RP62A).